The sequence spans 327 residues: N-acetylmuramoyl-L-alanine amidase sle1 (327 aa).

Positions 1–25 (MRKKIIATVIGTSALAAVTWTNADA) are cleaved as a signal peptide. 3 consecutive LysM domains span residues 27 to 70 (TTYK…SLKV), 86 to 129 (STYT…KLKV), and 150 to 193 (TTYT…KLKV). The segment at 68 to 89 (LKVSGSTSSSTSSNTSTGSTYT) is disordered. Residues 71–87 (SGSTSSSTSSNTSTGST) show a composition bias toward low complexity. Residues 203-327 (GSSSTGSAGY…SQVSSYVYIH (125 aa)) form the Peptidase C51 domain.

The protein localises to the secreted. The protein resides in the cell surface. It carries out the reaction Hydrolyzes the link between N-acetylmuramoyl residues and L-amino acid residues in certain cell-wall glycopeptides.. Peptidoglycan hydrolase involved in the splitting of the septum during cell division. The polypeptide is N-acetylmuramoyl-L-alanine amidase sle1 (sle1) (Staphylococcus saprophyticus subsp. saprophyticus (strain ATCC 15305 / DSM 20229 / NCIMB 8711 / NCTC 7292 / S-41)).